Reading from the N-terminus, the 179-residue chain is MYKFLVFSSVLVLFFAQASCQRFIQPTYRPPPTRRPIIRTARQAGQEPLWLYQGDNIPRAPSTADHPILPSKIDDVKLDPNRRYVRSVTNPENNEASIESSHHTVDIGLDRPIESHRNTRDLRFWNPREKLPLPTLPPFNPKPIYIDMGNRYRRHASDDQEELRHHNEHFLIPRDILQD.

Residues 1 to 16 form the signal peptide; sequence MYKFLVFSSVLVLFFA. Residues 17-120 constitute a propeptide that is removed on maturation; the sequence is QASCQRFIQP…RPIESHRNTR (104 aa). Threonine 135 carries an O-linked (GalNAc...) threonine glycan. A propeptide spanning residues 153 to 179 is cleaved from the precursor; it reads RRHASDDQEELRHHNEHFLIPRDILQD.

Belongs to the lebocin family. Post-translationally, O-glycosylation is important for the antibacterial activity of lebocin. As to expression, hemolymph. Produced in fat body.

It is found in the secreted. Functionally, antibacterial peptide. The sequence is that of Lebocin-4 (LEB4) from Bombyx mori (Silk moth).